A 418-amino-acid polypeptide reads, in one-letter code: Gamma-glutamyl phosphate reductase (418 aa).

This sequence belongs to the gamma-glutamyl phosphate reductase family.

The protein localises to the cytoplasm. It carries out the reaction L-glutamate 5-semialdehyde + phosphate + NADP(+) = L-glutamyl 5-phosphate + NADPH + H(+). The protein operates within amino-acid biosynthesis; L-proline biosynthesis; L-glutamate 5-semialdehyde from L-glutamate: step 2/2. In terms of biological role, catalyzes the NADPH-dependent reduction of L-glutamate 5-phosphate into L-glutamate 5-semialdehyde and phosphate. The product spontaneously undergoes cyclization to form 1-pyrroline-5-carboxylate. The sequence is that of Gamma-glutamyl phosphate reductase from Photobacterium profundum (strain SS9).